The sequence spans 346 residues: Flap endonuclease 1 (346 aa).

The interval 1–102 (MGVTELGKLI…AEIEERRKVK (102 aa)) is N-domain. 7 residues coordinate Mg(2+): aspartate 31, aspartate 84, glutamate 156, glutamate 158, aspartate 177, aspartate 179, and aspartate 239. The interval 120-261 (DVAKYMKRAV…KALKLVWEFG (142 aa)) is I-domain.

Belongs to the XPG/RAD2 endonuclease family. FEN1 subfamily. Interacts with PCNA. PCNA stimulates the nuclease activity without altering cleavage specificity. Requires Mg(2+) as cofactor.

In terms of biological role, structure-specific nuclease with 5'-flap endonuclease and 5'-3' exonuclease activities involved in DNA replication and repair. During DNA replication, cleaves the 5'-overhanging flap structure that is generated by displacement synthesis when DNA polymerase encounters the 5'-end of a downstream Okazaki fragment. Binds the unpaired 3'-DNA end and kinks the DNA to facilitate 5' cleavage specificity. Cleaves one nucleotide into the double-stranded DNA from the junction in flap DNA, leaving a nick for ligation. Also involved in the base excision repair (BER) pathway. Acts as a genome stabilization factor that prevents flaps from equilibrating into structures that lead to duplications and deletions. Also possesses 5'-3' exonuclease activity on nicked or gapped double-stranded DNA. The polypeptide is Flap endonuclease 1 (Pyrobaculum islandicum (strain DSM 4184 / JCM 9189 / GEO3)).